The following is an 82-amino-acid chain: UPF0512 protein P (82 aa).

Belongs to the UPF0512 family.

The chain is UPF0512 protein P from Dictyostelium discoideum (Social amoeba).